A 363-amino-acid chain; its full sequence is 3,4-dihydroxy-2-butanone 4-phosphate synthase (363 aa).

Residues 1–202 (MSHISPIPEI…ITDLIEYRSR (202 aa)) form a DHBP synthase region. D-ribulose 5-phosphate contacts are provided by residues 28-29 (RE), D33, 141-145 (RAGHT), and E165. E29 is a binding site for Mg(2+). H144 contacts Mg(2+). The GTP cyclohydrolase II-like stretch occupies residues 205-363 (SLLEDMGNAP…EVVGFEEAEK (159 aa)).

It in the N-terminal section; belongs to the DHBP synthase family. The protein in the C-terminal section; belongs to the GTP cyclohydrolase II family. Mg(2+) serves as cofactor. The cofactor is Mn(2+).

The enzyme catalyses D-ribulose 5-phosphate = (2S)-2-hydroxy-3-oxobutyl phosphate + formate + H(+). It functions in the pathway cofactor biosynthesis; riboflavin biosynthesis; 2-hydroxy-3-oxobutyl phosphate from D-ribulose 5-phosphate: step 1/1. Its function is as follows. Catalyzes the conversion of D-ribulose 5-phosphate to formate and 3,4-dihydroxy-2-butanone 4-phosphate. The chain is 3,4-dihydroxy-2-butanone 4-phosphate synthase (ribB) from Neisseria meningitidis serogroup A / serotype 4A (strain DSM 15465 / Z2491).